Here is a 474-residue protein sequence, read N- to C-terminus: NADH-ubiquinone oxidoreductase chain 4 (474 aa).

A run of 13 helical transmembrane segments spans residues 34–54 (SFFL…DLMF), 86–106 (LYGL…ISTV), 115–135 (LKFY…IKCS), 137–157 (LIAF…VVFF), 167–187 (AVIY…LACL), 211–231 (AMTI…IWPL), 242–262 (ASTG…LFGF), 276–295 (TFFL…NMWS), 302–322 (LVAY…LKGD), 325–345 (LIAY…LMFF), 373–393 (ALAI…LKFV), 405–425 (VSWP…LIGF), and 454–474 (YIIF…FLMI).

It belongs to the complex I subunit 4 family.

Its subcellular location is the mitochondrion membrane. It carries out the reaction a ubiquinone + NADH + 5 H(+)(in) = a ubiquinol + NAD(+) + 4 H(+)(out). In terms of biological role, core subunit of the mitochondrial membrane respiratory chain NADH dehydrogenase (Complex I) that is believed to belong to the minimal assembly required for catalysis. Complex I functions in the transfer of electrons from NADH to the respiratory chain. The immediate electron acceptor for the enzyme is believed to be ubiquinone. This Paramecium tetraurelia protein is NADH-ubiquinone oxidoreductase chain 4 (ND4).